Here is a 715-residue protein sequence, read N- to C-terminus: Fatty acid oxidation complex subunit alpha (715 aa).

An enoyl-CoA hydratase/isomerase region spans residues 1–190 (MIYEGKAITV…KVGAVDAVVA (190 aa)). A substrate-binding site is contributed by aspartate 297. A 3-hydroxyacyl-CoA dehydrogenase region spans residues 312-715 (HDVKQAAVLG…MAKNGQRFFN (404 aa)). Residues methionine 325, aspartate 344, 401–403 (VVE), lysine 408, and serine 430 contribute to the NAD(+) site. Catalysis depends on histidine 451, which acts as the For 3-hydroxyacyl-CoA dehydrogenase activity. Asparagine 454 is a binding site for NAD(+). Positions 501 and 660 each coordinate substrate.

In the N-terminal section; belongs to the enoyl-CoA hydratase/isomerase family. The protein in the C-terminal section; belongs to the 3-hydroxyacyl-CoA dehydrogenase family. Heterotetramer of two alpha chains (FadB) and two beta chains (FadA).

The enzyme catalyses a (3S)-3-hydroxyacyl-CoA + NAD(+) = a 3-oxoacyl-CoA + NADH + H(+). It carries out the reaction a (3S)-3-hydroxyacyl-CoA = a (2E)-enoyl-CoA + H2O. The catalysed reaction is a 4-saturated-(3S)-3-hydroxyacyl-CoA = a (3E)-enoyl-CoA + H2O. It catalyses the reaction (3S)-3-hydroxybutanoyl-CoA = (3R)-3-hydroxybutanoyl-CoA. The enzyme catalyses a (3Z)-enoyl-CoA = a 4-saturated (2E)-enoyl-CoA. It carries out the reaction a (3E)-enoyl-CoA = a 4-saturated (2E)-enoyl-CoA. Its pathway is lipid metabolism; fatty acid beta-oxidation. Functionally, involved in the aerobic and anaerobic degradation of long-chain fatty acids via beta-oxidation cycle. Catalyzes the formation of 3-oxoacyl-CoA from enoyl-CoA via L-3-hydroxyacyl-CoA. It can also use D-3-hydroxyacyl-CoA and cis-3-enoyl-CoA as substrate. The protein is Fatty acid oxidation complex subunit alpha of Pseudomonas putida (strain ATCC 47054 / DSM 6125 / CFBP 8728 / NCIMB 11950 / KT2440).